Reading from the N-terminus, the 511-residue chain is Cobyric acid synthase (511 aa).

The GATase cobBQ-type domain maps to 251 to 443; that stretch reads LLDIAIICLP…IHGIFDNDIF (193 aa). C332 serves as the catalytic Nucleophile. H435 is an active-site residue.

The protein belongs to the CobB/CobQ family. CobQ subfamily.

It functions in the pathway cofactor biosynthesis; adenosylcobalamin biosynthesis. In terms of biological role, catalyzes amidations at positions B, D, E, and G on adenosylcobyrinic A,C-diamide. NH(2) groups are provided by glutamine, and one molecule of ATP is hydrogenolyzed for each amidation. This chain is Cobyric acid synthase, found in Listeria welshimeri serovar 6b (strain ATCC 35897 / DSM 20650 / CCUG 15529 / CIP 8149 / NCTC 11857 / SLCC 5334 / V8).